The sequence spans 183 residues: MGIDINHKHDRKVRRTEVKSQDIYLRLLVKLYRYLARRTNAKFNQIVLRRLFMSRINRPPISVSRLARHMKKPTREGLIAVVVGTVTNDVRLYKIPKMTVAALHVTEKARARILAAGGEILTFDQLALRAPTGKKTVLVQGQRNAREAVRHFGPAPGAPRSHTKPYVRTKGHEKARPSRRANV.

The tract at residues Arg-150–Val-183 is disordered.

It belongs to the eukaryotic ribosomal protein eL18 family.

It localises to the cytoplasm. In Bombyx mori (Silk moth), this protein is Large ribosomal subunit protein eL18 (RpL18).